The sequence spans 187 residues: Ribosome hibernation promotion factor (187 aa).

It belongs to the HPF/YfiA ribosome-associated protein family. Long HPF subfamily. As to quaternary structure, interacts with 100S ribosomes.

It localises to the cytoplasm. Its function is as follows. Involved in 100S ribosome formation from 70S ribosomes; 100S ribosomes are probably translationally inactive. Ribosome hibernation may be used by the cell to decrease overall energy consumption under nutrient-limiting conditions. Unlike E.coli, 100S ribosomes are present from mid-exponential growth, peak during the transition from log to stationary phase and then decrease. The sequence is that of Ribosome hibernation promotion factor from Listeria monocytogenes serotype 1/2a (strain 10403S).